We begin with the raw amino-acid sequence, 292 residues long: GTP cyclohydrolase FolE2 (292 aa).

The protein belongs to the GTP cyclohydrolase IV family.

The catalysed reaction is GTP + H2O = 7,8-dihydroneopterin 3'-triphosphate + formate + H(+). It participates in cofactor biosynthesis; 7,8-dihydroneopterin triphosphate biosynthesis; 7,8-dihydroneopterin triphosphate from GTP: step 1/1. Converts GTP to 7,8-dihydroneopterin triphosphate. In Staphylococcus haemolyticus (strain JCSC1435), this protein is GTP cyclohydrolase FolE2.